A 71-amino-acid chain; its full sequence is DNA-directed RNA polymerase subunit 10-like protein (71 aa).

4 residues coordinate Zn(2+): Cys7, Cys10, Cys44, and Cys45.

The protein belongs to the archaeal Rpo10/eukaryotic RPB10 RNA polymerase subunit family. Interacts with IYO.

It localises to the nucleus. In Arabidopsis thaliana (Mouse-ear cress), this protein is DNA-directed RNA polymerase subunit 10-like protein.